Reading from the N-terminus, the 133-residue chain is ATP synthase epsilon chain, chloroplastic (133 aa).

This sequence belongs to the ATPase epsilon chain family. As to quaternary structure, F-type ATPases have 2 components, CF(1) - the catalytic core - and CF(0) - the membrane proton channel. CF(1) has five subunits: alpha(3), beta(3), gamma(1), delta(1), epsilon(1). CF(0) has three main subunits: a, b and c.

The protein localises to the plastid. It is found in the chloroplast thylakoid membrane. Produces ATP from ADP in the presence of a proton gradient across the membrane. The sequence is that of ATP synthase epsilon chain, chloroplastic from Phaeodactylum tricornutum (strain CCAP 1055/1).